A 652-amino-acid polypeptide reads, in one-letter code: ATP-dependent zinc metalloprotease FtsH (652 aa).

Over 1-11 the chain is Cytoplasmic; it reads MKKQNNGLIKN. Residues 12-32 form a helical membrane-spanning segment; sequence PFLWLLFIFFLVTGFQYFYSG. The Extracellular segment spans residues 33 to 131; the sequence is NNSGGSQQIN…EVTVKHESSS (99 aa). The helical transmembrane segment at 132-152 threads the bilayer; it reads GIWINLLVSIVPFGILFFFLF. Topologically, residues 153-652 are cytoplasmic; that stretch reads SMMGNMGGGN…EVKSKMNDEK (500 aa). 227 to 234 serves as a coordination point for ATP; the sequence is GPPGTGKT. His-449 is a binding site for Zn(2+). Residue Glu-450 is part of the active site. Zn(2+) is bound by residues His-453 and Asp-525. The disordered stretch occupies residues 628–652; sequence MPEAVEEESHALSYDEVKSKMNDEK. Positions 634–652 are enriched in basic and acidic residues; the sequence is EESHALSYDEVKSKMNDEK.

In the central section; belongs to the AAA ATPase family. It in the C-terminal section; belongs to the peptidase M41 family. As to quaternary structure, homohexamer. It depends on Zn(2+) as a cofactor.

It is found in the cell membrane. Acts as a processive, ATP-dependent zinc metallopeptidase for both cytoplasmic and membrane proteins. Plays a role in the quality control of integral membrane proteins. This chain is ATP-dependent zinc metalloprotease FtsH, found in Streptococcus pneumoniae (strain ATCC BAA-255 / R6).